The following is a 583-amino-acid chain: 2-succinyl-5-enolpyruvyl-6-hydroxy-3-cyclohexene-1-carboxylate synthase (583 aa).

The protein belongs to the TPP enzyme family. MenD subfamily. In terms of assembly, homodimer. Mg(2+) is required as a cofactor. The cofactor is Mn(2+). It depends on thiamine diphosphate as a cofactor.

The enzyme catalyses isochorismate + 2-oxoglutarate + H(+) = 5-enolpyruvoyl-6-hydroxy-2-succinyl-cyclohex-3-ene-1-carboxylate + CO2. Its pathway is quinol/quinone metabolism; 1,4-dihydroxy-2-naphthoate biosynthesis; 1,4-dihydroxy-2-naphthoate from chorismate: step 2/7. It participates in quinol/quinone metabolism; menaquinone biosynthesis. Functionally, catalyzes the thiamine diphosphate-dependent decarboxylation of 2-oxoglutarate and the subsequent addition of the resulting succinic semialdehyde-thiamine pyrophosphate anion to isochorismate to yield 2-succinyl-5-enolpyruvyl-6-hydroxy-3-cyclohexene-1-carboxylate (SEPHCHC). In Chlorobium limicola (strain DSM 245 / NBRC 103803 / 6330), this protein is 2-succinyl-5-enolpyruvyl-6-hydroxy-3-cyclohexene-1-carboxylate synthase.